The sequence spans 760 residues: Xaa-Pro dipeptidyl-peptidase (760 aa).

Active-site charge relay system residues include Ser-349, Asp-469, and His-499.

It belongs to the peptidase S15 family. Homodimer.

The protein localises to the cytoplasm. It carries out the reaction Hydrolyzes Xaa-Pro-|- bonds to release unblocked, N-terminal dipeptides from substrates including Ala-Pro-|-p-nitroanilide and (sequentially) Tyr-Pro-|-Phe-Pro-|-Gly-Pro-|-Ile.. In terms of biological role, removes N-terminal dipeptides sequentially from polypeptides having unsubstituted N-termini provided that the penultimate residue is proline. This chain is Xaa-Pro dipeptidyl-peptidase, found in Streptococcus pyogenes serotype M4 (strain MGAS10750).